The primary structure comprises 333 residues: Isopenicillin N synthase (333 aa).

Isopenicillin N contacts are provided by arginine 87, tyrosine 91, and tyrosine 191. Residues arginine 87, tyrosine 91, tyrosine 191, histidine 216, and aspartate 218 each coordinate N-[(5S)-5-amino-5-carboxypentanoyl]-L-cysteinyl-D-valine. Residues 180 to 290 (DTLSCRSLMI…RLSLPFFLHA (111 aa)) enclose the Fe2OG dioxygenase domain. Residues histidine 216, aspartate 218, and histidine 272 each contribute to the Fe(2+) site. Residue arginine 281 participates in 2-oxoglutarate binding. Serine 283 provides a ligand contact to isopenicillin N. Residue serine 283 participates in N-[(5S)-5-amino-5-carboxypentanoyl]-L-cysteinyl-D-valine binding.

It belongs to the iron/ascorbate-dependent oxidoreductase family. Fe cation is required as a cofactor. L-ascorbate serves as cofactor.

The catalysed reaction is N-[(5S)-5-amino-5-carboxypentanoyl]-L-cysteinyl-D-valine + O2 = isopenicillin N + 2 H2O. It participates in antibiotic biosynthesis; penicillin G biosynthesis; penicillin G from L-alpha-aminoadipate and L-cysteine and L-valine: step 2/3. Removes, in the presence of oxygen, 4 hydrogen atoms from delta-L-(alpha-aminoadipyl)-L-cysteinyl-D-valine (ACV) to form the azetidinone and thiazolidine rings of isopenicillin. This chain is Isopenicillin N synthase (pcbC), found in Streptomyces microflavus (Streptomyces lipmanii).